We begin with the raw amino-acid sequence, 156 residues long: ATP synthase subunit b (156 aa).

Residues 11–31 form a helical membrane-spanning segment; sequence AIAFVLFVLFCMKYVWPPIMA.

It belongs to the ATPase B chain family. F-type ATPases have 2 components, F(1) - the catalytic core - and F(0) - the membrane proton channel. F(1) has five subunits: alpha(3), beta(3), gamma(1), delta(1), epsilon(1). F(0) has three main subunits: a(1), b(2) and c(10-14). The alpha and beta chains form an alternating ring which encloses part of the gamma chain. F(1) is attached to F(0) by a central stalk formed by the gamma and epsilon chains, while a peripheral stalk is formed by the delta and b chains.

The protein resides in the cell inner membrane. Its function is as follows. F(1)F(0) ATP synthase produces ATP from ADP in the presence of a proton or sodium gradient. F-type ATPases consist of two structural domains, F(1) containing the extramembraneous catalytic core and F(0) containing the membrane proton channel, linked together by a central stalk and a peripheral stalk. During catalysis, ATP synthesis in the catalytic domain of F(1) is coupled via a rotary mechanism of the central stalk subunits to proton translocation. Functionally, component of the F(0) channel, it forms part of the peripheral stalk, linking F(1) to F(0). In Cronobacter sakazakii (strain ATCC BAA-894) (Enterobacter sakazakii), this protein is ATP synthase subunit b.